The chain runs to 669 residues: Dynamin-related protein 4C (669 aa).

Residues 1–21 (MVKKKVATKKNSPSLAIAKKK) are disordered. In terms of domain architecture, Dynamin-type G spans 62–323 (GIHLPTIVVV…QSSMIARCLP (262 aa)). The segment at 72–79 (GDQSSGKS) is G1 motif. 72–79 (GDQSSGKS) lines the GTP pocket. Residues 97-99 (CTR) form a G2 motif region. The segment at 171 to 174 (DLPG) is G3 motif. GTP-binding positions include 171 to 175 (DLPGI) and 240 to 243 (TKAD). The tract at residues 240–243 (TKAD) is G4 motif. A region of interest (G5 motif) is located at residue glutamate 273. Residues 575–669 (AFDMKMRITS…AVAAIVDQNC (95 aa)) enclose the GED domain.

Belongs to the TRAFAC class dynamin-like GTPase superfamily. Dynamin/Fzo/YdjA family.

The protein resides in the cytoplasm. It is found in the cytoskeleton. Putative microtubule-associated force-producing protein, able to bind and hydrolyze GTP. The polypeptide is Dynamin-related protein 4C (DRP4C) (Arabidopsis thaliana (Mouse-ear cress)).